A 248-amino-acid chain; its full sequence is tRNA (guanine-N(1)-)-methyltransferase (248 aa).

S-adenosyl-L-methionine contacts are provided by residues G117 and 137-142; that span reads IGDFVL.

This sequence belongs to the RNA methyltransferase TrmD family. In terms of assembly, homodimer.

It is found in the cytoplasm. It carries out the reaction guanosine(37) in tRNA + S-adenosyl-L-methionine = N(1)-methylguanosine(37) in tRNA + S-adenosyl-L-homocysteine + H(+). Specifically methylates guanosine-37 in various tRNAs. This Polynucleobacter asymbioticus (strain DSM 18221 / CIP 109841 / QLW-P1DMWA-1) (Polynucleobacter necessarius subsp. asymbioticus) protein is tRNA (guanine-N(1)-)-methyltransferase.